The primary structure comprises 420 residues: Proteinase-activated receptor 1 (420 aa).

An N-terminal signal peptide occupies residues 1 to 20 (MMELRVLLLLLLLTLLGAMG). Residues 21–42 (SLCLANSDTQAKGAHSNNMTIK) constitute a propeptide, removed for receptor activation. Asn38 is a glycosylation site (N-linked (GlcNAc...) asparagine). Residues 43–101 (TFRIFDDSESEFEEIPWDELDESGEGSGDQAPVSRSARKPIRRNITKEAEQYLSSQWLT) are Extracellular-facing. The segment at 61–80 (ELDESGEGSGDQAPVSRSAR) is disordered. The N-linked (GlcNAc...) asparagine glycan is linked to Asn86. A helical membrane pass occupies residues 102–127 (KFVPSLYTVVFIVGLPLNLLAIIIFL). Topologically, residues 128-136 (FKMKVRKPA) are cytoplasmic. A helical transmembrane segment spans residues 137–156 (VVYMLNLAIADVFFVSVLPF). Over 157 to 175 (KIAYHLSGNDWLFGPGMCR) the chain is Extracellular. Cys174 and Cys253 form a disulfide bridge. Residues 176–197 (IVTAIFYCNMYCSVLLIASISV) form a helical membrane-spanning segment. Over 198–217 (DRFLAVVYPMHSLSWRTMSR) the chain is Cytoplasmic. A helical membrane pass occupies residues 218-238 (AYMACSFIWLISIASTIPLLV). Topologically, residues 239–267 (TEQTQKIPRLDITTCHDVLDLKDLKDFYI) are extracellular. The chain crosses the membrane as a helical span at residues 268 to 287 (YYFSSFCLLFFFVPFIITTI). The Cytoplasmic segment spans residues 288–310 (CYIGIIRSLSSSSIENSCKKTRA). The chain crosses the membrane as a helical span at residues 311 to 333 (LFLAVVVLCVFIICFGPTNVLFL). Topologically, residues 334–345 (THYLQEANEFLY) are extracellular. Residues 346–369 (FAYILSACVGSVSCCLDPLIYYYA) form a helical membrane-spanning segment. Residues 370 to 420 (SSQCQRYLYSLLCCRKVSEPGSSTGQLMSTAMKNDNCSTNAKSSIYKKLLA) lie on the Cytoplasmic side of the membrane.

Belongs to the G-protein coupled receptor 1 family. Post-translationally, proteolytic cleavage generates a new N-terminus that functions as a tethered ligand.

It localises to the cell membrane. High affinity receptor that binds the activated thrombin, leading to calcium release from intracellular stores. The thrombin-activated receptor signaling pathway is mediated through PTX-insensitive G proteins, activation of phospholipase C resulting in the production of 1D-myo-inositol 1,4,5-trisphosphate (InsP3) which binds to InsP3 receptors causing calcium release from the stores. The polypeptide is Proteinase-activated receptor 1 (Xenopus laevis (African clawed frog)).